The sequence spans 361 residues: Chorismate synthase (361 aa).

Residues Arg-48 and Arg-54 each coordinate NADP(+). Residues 125–127 (RSS), 238–239 (NA), Gly-278, 293–297 (KPTSS), and Arg-319 each bind FMN.

This sequence belongs to the chorismate synthase family. Homotetramer. FMNH2 is required as a cofactor.

The catalysed reaction is 5-O-(1-carboxyvinyl)-3-phosphoshikimate = chorismate + phosphate. Its pathway is metabolic intermediate biosynthesis; chorismate biosynthesis; chorismate from D-erythrose 4-phosphate and phosphoenolpyruvate: step 7/7. Its function is as follows. Catalyzes the anti-1,4-elimination of the C-3 phosphate and the C-6 proR hydrogen from 5-enolpyruvylshikimate-3-phosphate (EPSP) to yield chorismate, which is the branch point compound that serves as the starting substrate for the three terminal pathways of aromatic amino acid biosynthesis. This reaction introduces a second double bond into the aromatic ring system. The sequence is that of Chorismate synthase from Salmonella typhi.